We begin with the raw amino-acid sequence, 80 residues long: Protein FAM229B (80 aa).

Residues 1–45 (MPFRFGTQPRRFPVEGGDSSIELESGLSSSASCNGKETSPNRQLR) are disordered. Over residues 15 to 32 (EGGDSSIELESGLSSSAS) the composition is skewed to low complexity. Polar residues predominate over residues 33-42 (CNGKETSPNR).

The protein belongs to the FAM229 family.

The sequence is that of Protein FAM229B (Fam229b) from Rattus norvegicus (Rat).